Reading from the N-terminus, the 812-residue chain is Eukaryotic translation initiation factor 3 subunit C (812 aa).

Positions 1–110 are disordered; the sequence is MSRFFSSNYE…EESDEEDGKK (110 aa). 2 stretches are compositionally biased toward acidic residues: residues 18 to 30 and 38 to 64; these read SEEDLLSSSEEDL and SELDQESDDSFFNESESESEADVDSDD. Phosphoserine occurs at positions 98, 99, and 103. The PCI domain occupies 608–783; that stretch reads YHQHINLDLI…TIFVVEKGDE (176 aa).

The protein belongs to the eIF-3 subunit C family. The eukaryotic translation initiation factor 3 (eIF-3) core complex is composed of TIF32, PRT1, NIP1, TIF34 and TIF35. A subcomplex of TIF32, NIP1 and PRT1 mediates the interaction with eIF-1, TIF5/eIF-5 and HCR1. The factors eIF-1, eIF-2, eIF-3, TIF5/eIF-5 and methionyl-tRNAi form a multifactor complex (MFC) that may bind to the 40S ribosome. TIF32, NIP1 and TIF5/eIF-5 comprise a minimal 40S-ribosome-binding unit. NIP1 interacts with TIF5/eIF-5 and SUI1.

The protein localises to the cytoplasm. In terms of biological role, component of the eukaryotic translation initiation factor 3 (eIF-3) complex, which is involved in protein synthesis of a specialized repertoire of mRNAs and, together with other initiation factors, stimulates binding of mRNA and methionyl-tRNAi to the 40S ribosome. The eIF-3 complex specifically targets and initiates translation of a subset of mRNAs involved in cell proliferation. The polypeptide is Eukaryotic translation initiation factor 3 subunit C (Saccharomyces cerevisiae (strain ATCC 204508 / S288c) (Baker's yeast)).